A 228-amino-acid chain; its full sequence is L-ornithine N5-acetyltransferase NATA1 (228 aa).

Positions Met1–His21 are disordered. The 151-residue stretch at Val77–Asn227 folds into the N-acetyltransferase domain. Acetyl-CoA contacts are provided by residues Ile153–Met155, Arg161–Lys166, Asn192–Ala195, and Tyr199.

Belongs to the acetyltransferase family.

Its function is as follows. Acetyltransferase that converts ornithine to N5-acetylornithine, which is likely used in plant defense. This chain is L-ornithine N5-acetyltransferase NATA1 (NATA1), found in Arabidopsis thaliana (Mouse-ear cress).